Reading from the N-terminus, the 249-residue chain is ATP-dependent Clp protease proteolytic subunit (249 aa).

Ser-107 serves as the catalytic Nucleophile. The active site involves His-132. Residues 212 to 249 (ESASQDNSLDPDAPDESASQDNSLDPDAPDETRPPKLR) are disordered.

Belongs to the peptidase S14 family. In terms of assembly, component of the chloroplastic Clp protease core complex.

It is found in the plastid. Its subcellular location is the chloroplast stroma. It carries out the reaction Hydrolysis of proteins to small peptides in the presence of ATP and magnesium. alpha-casein is the usual test substrate. In the absence of ATP, only oligopeptides shorter than five residues are hydrolyzed (such as succinyl-Leu-Tyr-|-NHMec, and Leu-Tyr-Leu-|-Tyr-Trp, in which cleavage of the -Tyr-|-Leu- and -Tyr-|-Trp bonds also occurs).. Cleaves peptides in various proteins in a process that requires ATP hydrolysis. Has a chymotrypsin-like activity. Plays a major role in the degradation of misfolded proteins. This chain is ATP-dependent Clp protease proteolytic subunit, found in Oenothera elata subsp. hookeri (Hooker's evening primrose).